A 555-amino-acid polypeptide reads, in one-letter code: Urocanate hydratase (555 aa).

NAD(+) is bound by residues 52-53, glutamine 130, 176-178, glutamate 196, arginine 201, 242-243, 263-267, 273-274, and tyrosine 322; these read GG, GMG, NA, QTSAH, and YL. Residue cysteine 410 is part of the active site. Position 492 (glycine 492) interacts with NAD(+).

The protein belongs to the urocanase family. Requires NAD(+) as cofactor.

The protein localises to the cytoplasm. It catalyses the reaction 4-imidazolone-5-propanoate = trans-urocanate + H2O. Its pathway is amino-acid degradation; L-histidine degradation into L-glutamate; N-formimidoyl-L-glutamate from L-histidine: step 2/3. Its function is as follows. Catalyzes the conversion of urocanate to 4-imidazolone-5-propionate. This is Urocanate hydratase from Shewanella baltica (strain OS155 / ATCC BAA-1091).